A 158-amino-acid polypeptide reads, in one-letter code: uncharacterized protein (158 aa).

This is an uncharacterized protein from Saccharomyces cerevisiae (strain ATCC 204508 / S288c) (Baker's yeast).